The sequence spans 229 residues: Triosephosphate isomerase (229 aa).

6-8 (NFK) is a binding site for substrate. Residue His-88 is the Electrophile of the active site. The Proton acceptor role is filled by Glu-157. Substrate-binding residues include Gly-163 and Ser-193.

It belongs to the triosephosphate isomerase family. As to quaternary structure, homodimer.

It is found in the cytoplasm. The enzyme catalyses D-glyceraldehyde 3-phosphate = dihydroxyacetone phosphate. The protein operates within carbohydrate biosynthesis; gluconeogenesis. It participates in carbohydrate degradation; glycolysis; D-glyceraldehyde 3-phosphate from glycerone phosphate: step 1/1. In terms of biological role, involved in the gluconeogenesis. Catalyzes stereospecifically the conversion of dihydroxyacetone phosphate (DHAP) to D-glyceraldehyde-3-phosphate (G3P). The sequence is that of Triosephosphate isomerase from Sulfurovum sp. (strain NBC37-1).